The sequence spans 112 residues: Protein F-112 (112 aa).

Functionally, essential for virus function. The polypeptide is Protein F-112 (Saccharolobus solfataricus (Sulfolobus solfataricus)).